Consider the following 219-residue polypeptide: MALLVMVRHGQSIWNLENRFTGWTDVPLTEKGRAEARACGELIYCVPFAVAFTSKLTRAQDTLRLILEAADQPDVPVIEDQALNERHYGELQGLNKAETAAKYGEETVRQWRRSLEGRPPGGESLKDTALRSLRYFYEKIVPELEAGKNVLVSAHGNTIRAILMELDHLSPEQVEKVEIEYCVPVAFEHQADGTFSQVLMPRCDIIRPPQPPARSIARL.

Residues 8 to 15 (RHGQSIWN), 21 to 22 (TG), Arg58, 85 to 88 (ERHY), Lys96, 112 to 113 (RR), and 156 to 157 (GN) each bind substrate. The active-site Tele-phosphohistidine intermediate is the His9. Catalysis depends on Glu85, which acts as the Proton donor/acceptor.

The protein belongs to the phosphoglycerate mutase family. BPG-dependent PGAM subfamily.

The enzyme catalyses (2R)-2-phosphoglycerate = (2R)-3-phosphoglycerate. The protein operates within carbohydrate degradation; glycolysis; pyruvate from D-glyceraldehyde 3-phosphate: step 3/5. Functionally, catalyzes the interconversion of 2-phosphoglycerate and 3-phosphoglycerate. This chain is 2,3-bisphosphoglycerate-dependent phosphoglycerate mutase 2, found in Gloeobacter violaceus (strain ATCC 29082 / PCC 7421).